Reading from the N-terminus, the 708-residue chain is O-antigen chain terminator bifunctional methyltransferase/kinase WbdD (708 aa).

Residues Met1 to Asn210 form a methyltransferase region. Residues Tyr16 to Gln17, Arg36, Gly61, Asp82 to Asn87, Gly108 to Glu111, and Leu128 each bind S-adenosyl-L-methionine. Residues His211 to Arg459 form a kinase region. Residues Pro229, His237, Arg241–Tyr243, Lys252, Glu274, Glu309–Leu311, Met358, and Asp369 each bind ATP. Residues Ala485 to Ser594 adopt a coiled-coil conformation. Positions Tyr601–Pro669 are required for membrane-binding. The segment at Val687–Lys708 is required for localizing WbdA to the membrane.

This sequence belongs to the WbdD family. Interacts with WbdA.

It localises to the cell inner membrane. The enzyme catalyses 3-O-phospho-alpha-D-Man-(1-&gt;2)-alpha-D-Man-(1-&gt;2)-[alpha-D-Man-(1-&gt;3)-alpha-D-Man-(1-&gt;3)-alpha-D-Man-(1-&gt;2)-alpha-D-Man-(1-&gt;2)](n)-alpha-D-Man-(1-&gt;3)-alpha-D-Man-(1-&gt;3)-alpha-D-Man-(1-&gt;3)-alpha-D-GlcNAc-di-trans,octa-cis-undecaprenyl diphosphate + S-adenosyl-L-methionine = 3-O-methylphospho-alpha-D-Man-(1-&gt;2)-alpha-D-Man-(1-&gt;2)-[alpha-D-Man-(1-&gt;3)-alpha-D-Man-(1-&gt;3)-alpha-D-Man-(1-&gt;2)-alpha-D-Man-(1-&gt;2)](n)-alpha-D-Man-(1-&gt;3)-alpha-D-Man-(1-&gt;3)-alpha-D-Man-(1-&gt;3)-alpha-D-GlcNAc-di-trans,octa-cis-undecaprenyl diphosphate + S-adenosyl-L-homocysteine. It catalyses the reaction alpha-D-Man-(1-&gt;2)-alpha-D-Man-(1-&gt;2)-[alpha-D-Man-(1-&gt;3)-alpha-D-Man-(1-&gt;3)-alpha-D-Man-(1-&gt;2)-alpha-D-Man-(1-&gt;2)](n)-alpha-D-Man-(1-&gt;3)-alpha-D-Man-(1-&gt;3)-alpha-D-Man-(1-&gt;3)-alpha-D-GlcNAc-di-trans,octa-cis-undecaprenyl diphosphate + ATP = 3-O-phospho-alpha-D-Man-(1-&gt;2)-alpha-D-Man-(1-&gt;2)-[alpha-D-Man-(1-&gt;3)-alpha-D-Man-(1-&gt;3)-alpha-D-Man-(1-&gt;2)-alpha-D-Man-(1-&gt;2)](n)-alpha-D-Man-(1-&gt;3)-alpha-D-Man-(1-&gt;3)-alpha-D-Man-(1-&gt;3)-alpha-D-GlcNAc-di-trans,octa-cis-undecaprenyl diphosphate + ADP + H(+). The protein operates within bacterial outer membrane biogenesis; LPS O-antigen biosynthesis. Functionally, regulates the length of the LPS O-antigen polysaccharide chain. Stops the polymerization of the chain by phosphorylating and then methylating the phosphate on the terminal sugar. This terminal modification is essential for export of the O-antigen across the inner membrane. WbdD is also required for correct localization of the WbdA mannosyltransferase. This Escherichia coli protein is O-antigen chain terminator bifunctional methyltransferase/kinase WbdD.